A 686-amino-acid polypeptide reads, in one-letter code: Forkhead box protein P1 (686 aa).

2 stretches are compositionally biased toward polar residues: residues 1–19 (MMQESGTETKSNGSAIQNG) and 279–292 (IINPHASTNGQLSV). 2 disordered regions span residues 1–23 (MMQESGTETKSNGSAIQNGASGG) and 279–306 (IINPHASTNGQLSVHTPKRESLSHEEHS). The span at 295 to 306 (PKRESLSHEEHS) shows a compositional bias: basic and acidic residues. The C2H2-type zinc finger occupies 315–340 (GVCKWPGCEAVCEDFQSFLKHLNSEH). The leucine-zipper stretch occupies residues 357 to 378 (VQQLELQLAKDKERLQAMMTHL). A CTBP1-binding region spans residues 391–395 (PLNLV). The segment covering 403 to 412 (TASEASPQSL) has biased composition (polar residues). The disordered stretch occupies residues 403–440 (TASEASPQSLPHTPTTPTAPITPVTQGPSVITTTSMHN). The segment covering 413–427 (PHTPTTPTAPITPVT) has biased composition (low complexity). The segment covering 428-439 (QGPSVITTTSMH) has biased composition (polar residues). Residues 474–564 (RPPFTYASLI…PQKISGNPSL (91 aa)) constitute a DNA-binding region (fork-head). Residues 619–686 (MEHTNSNGSD…EDEPVNEDIE (68 aa)) form a disordered region. Residues 621–632 (HTNSNGSDSSPG) are compositionally biased toward polar residues. Over residues 676–686 (YEDEPVNEDIE) the composition is skewed to acidic residues.

It localises to the nucleus. Functionally, transcriptional repressor. This Gallus gallus (Chicken) protein is Forkhead box protein P1 (FOXP1).